We begin with the raw amino-acid sequence, 1025 residues long: Multidrug resistance protein MdtC (1025 aa).

Transmembrane regions (helical) follow at residues 3-23 (FFAL…AITL), 333-353 (EVEQ…FLFL), 360-380 (IIPA…MYLC), 387-407 (LSLM…IVVL), 431-451 (VGFT…PLLL), 463-483 (FAVT…TLTP), 528-548 (LVGV…ISIP), 853-873 (VILI…LYES), 875-895 (VHPL…LLAL), 897-917 (LFNA…IGIV), 953-973 (PIMM…LSGG), and 984-1004 (ITIV…TPVV).

Belongs to the resistance-nodulation-cell division (RND) (TC 2.A.6) family. MdtC subfamily. In terms of assembly, part of a tripartite efflux system composed of MdtA, MdtB and MdtC. MdtC forms a heteromultimer with MdtB.

The protein localises to the cell inner membrane. In terms of biological role, the MdtABC tripartite complex confers resistance against novobiocin and deoxycholate. This Escherichia coli (strain K12 / MC4100 / BW2952) protein is Multidrug resistance protein MdtC.